The primary structure comprises 386 residues: Bifunctional enzyme IspD/IspF (386 aa).

A 2-C-methyl-D-erythritol 4-phosphate cytidylyltransferase region spans residues 1-226; that stretch reads MATPSPLPSF…EDFMADLLPV (226 aa). Residues 227–386 are 2-C-methyl-D-erythritol 2,4-cyclodiphosphate synthase; sequence RVGTGFDVHK…ATVVRKDTPA (160 aa). 2 residues coordinate a divalent metal cation: D233 and H235. 4-CDP-2-C-methyl-D-erythritol 2-phosphate-binding positions include 233-235 and 259-260; these read DVH and HS. H267 contributes to the a divalent metal cation binding site. Residues 281–283, 357–360, F364, and R367 each bind 4-CDP-2-C-methyl-D-erythritol 2-phosphate; these read DIG and TTTE.

It in the N-terminal section; belongs to the IspD/TarI cytidylyltransferase family. IspD subfamily. In the C-terminal section; belongs to the IspF family. Requires a divalent metal cation as cofactor.

It carries out the reaction 2-C-methyl-D-erythritol 4-phosphate + CTP + H(+) = 4-CDP-2-C-methyl-D-erythritol + diphosphate. The catalysed reaction is 4-CDP-2-C-methyl-D-erythritol 2-phosphate = 2-C-methyl-D-erythritol 2,4-cyclic diphosphate + CMP. It functions in the pathway isoprenoid biosynthesis; isopentenyl diphosphate biosynthesis via DXP pathway; isopentenyl diphosphate from 1-deoxy-D-xylulose 5-phosphate: step 2/6. It participates in isoprenoid biosynthesis; isopentenyl diphosphate biosynthesis via DXP pathway; isopentenyl diphosphate from 1-deoxy-D-xylulose 5-phosphate: step 4/6. Functionally, bifunctional enzyme that catalyzes the formation of 4-diphosphocytidyl-2-C-methyl-D-erythritol from CTP and 2-C-methyl-D-erythritol 4-phosphate (MEP) (IspD), and catalyzes the conversion of 4-diphosphocytidyl-2-C-methyl-D-erythritol 2-phosphate (CDP-ME2P) to 2-C-methyl-D-erythritol 2,4-cyclodiphosphate (ME-CPP) with a corresponding release of cytidine 5-monophosphate (CMP) (IspF). The protein is Bifunctional enzyme IspD/IspF of Erythrobacter litoralis (strain HTCC2594).